Reading from the N-terminus, the 122-residue chain is Large ribosomal subunit protein uL18 (122 aa).

The protein belongs to the universal ribosomal protein uL18 family. As to quaternary structure, part of the 50S ribosomal subunit; part of the 5S rRNA/L5/L18/L25 subcomplex. Contacts the 5S and 23S rRNAs.

This is one of the proteins that bind and probably mediate the attachment of the 5S RNA into the large ribosomal subunit, where it forms part of the central protuberance. The sequence is that of Large ribosomal subunit protein uL18 from Leptospira borgpetersenii serovar Hardjo-bovis (strain JB197).